A 768-amino-acid chain; its full sequence is DNA topoisomerase 4 subunit A (768 aa).

A Topo IIA-type catalytic domain is found at 38-521 (LPEVSDGQKP…AGRAVLTQTA (484 aa)). Catalysis depends on tyrosine 126, which acts as the O-(5'-phospho-DNA)-tyrosine intermediate.

It belongs to the type II topoisomerase GyrA/ParC subunit family. ParC type 1 subfamily. As to quaternary structure, heterotetramer composed of ParC and ParE.

The protein resides in the cell membrane. The enzyme catalyses ATP-dependent breakage, passage and rejoining of double-stranded DNA.. Functionally, topoisomerase IV is essential for chromosome segregation. It relaxes supercoiled DNA. Performs the decatenation events required during the replication of a circular DNA molecule. This is DNA topoisomerase 4 subunit A from Neisseria gonorrhoeae.